A 113-amino-acid chain; its full sequence is UPF0482 protein YnfB (113 aa).

The signal sequence occupies residues 1-28 (MKITLSKRIGLLAFLLPCALALSTTVHA).

The protein belongs to the UPF0482 family.

The polypeptide is UPF0482 protein YnfB (Shigella dysenteriae serotype 1 (strain Sd197)).